A 124-amino-acid chain; its full sequence is Fluoride-specific ion channel FluC (124 aa).

Transmembrane regions (helical) follow at residues 1–21, 36–56, 70–90, and 100–120; these read MLNT…RYGV, TMII…WFVV, TGIL…FLLI, and LYVI…FAII. Na(+) is bound by residues Gly74 and Thr77.

Belongs to the fluoride channel Fluc/FEX (TC 1.A.43) family.

The protein localises to the cell inner membrane. The enzyme catalyses fluoride(in) = fluoride(out). Na(+) is not transported, but it plays an essential structural role and its presence is essential for fluoride channel function. In terms of biological role, fluoride-specific ion channel. Important for reducing fluoride concentration in the cell, thus reducing its toxicity. In Methylobacterium sp. (strain 4-46), this protein is Fluoride-specific ion channel FluC.